We begin with the raw amino-acid sequence, 146 residues long: uncharacterized protein (146 aa).

Helical transmembrane passes span 89–111 and 121–143; these read AIEMVGKVLILVPLLASLVLLLY and IGCGFCLGTVILAGIVLVGYSVV.

The protein resides in the cell membrane. This is an uncharacterized protein from Archaeoglobus fulgidus (strain ATCC 49558 / DSM 4304 / JCM 9628 / NBRC 100126 / VC-16).